The following is a 124-amino-acid chain: Large ribosomal subunit protein bL19 (124 aa).

This sequence belongs to the bacterial ribosomal protein bL19 family.

Functionally, this protein is located at the 30S-50S ribosomal subunit interface and may play a role in the structure and function of the aminoacyl-tRNA binding site. The chain is Large ribosomal subunit protein bL19 from Cereibacter sphaeroides (strain ATCC 17029 / ATH 2.4.9) (Rhodobacter sphaeroides).